The sequence spans 1440 residues: Gag-Pol polyprotein (1440 aa).

Gly2 carries N-myristoyl glycine; by host lipidation. The interaction with Gp41 stretch occupies residues 7-31 (VLSGGKLDAWEKIRLRPGGKKKYRL). The tract at residues 8–43 (LSGGKLDAWEKIRLRPGGKKKYRLKHLVWASRELER) is interaction with host CALM1. The interaction with host AP3D1 stretch occupies residues 12–19 (KLDAWEKI). Residues 14–33 (DAWEKIRLRPGGKKKYRLKH) form an interaction with membrane phosphatidylinositol 4,5-bisphosphate and RNA region. Positions 16–22 (WEKIRLR) match the Nuclear export signal motif. Positions 26–32 (KKKYRLK) match the Nuclear localization signal motif. Positions 73–77 (EEIKS) are interaction with membrane phosphatidylinositol 4,5-bisphosphate. At Tyr138 the chain carries Phosphotyrosine; by host. The segment at 195 to 233 (NIVGGHQAAMQMLKDTINEEAADWDRVHPVHAGPIPPGQ) is interaction with human PPIA/CYPA and NUP153. The tract at residues 283-369 (YSPVSILDIR…GGPSHKARVL (87 aa)) is dimerization/Multimerization of capsid protein p24. 2 CCHC-type zinc fingers span residues 396–413 (IKCF…NCRA) and 417–434 (KGCW…DCTE). The tract at residues 494 to 498 (PQITL) is dimerization of protease. The region spanning 513-582 (KEALLDTGAD…TPVNIIGRNM (70 aa)) is the Peptidase A2 domain. Residue Asp518 is the For protease activity; shared with dimeric partner of the active site. Dimerization of protease regions lie at residues 542 to 548 (GIGGFIK) and 581 to 593 (NMLT…LNFP). A Reverse transcriptase domain is found at 636–826 (EGKILKIGPE…PPFLWMGYEL (191 aa)). Residues Asp702, Asp777, and Asp778 each contribute to the Mg(2+) site. Residues 819–827 (FLWMGYELH) form an RT 'primer grip' region. Residues 990–1006 (WEAWWTEYWQATWIPEW) carry the Tryptophan repeat motif motif. The 124-residue stretch at 1026-1149 (IVGAETFYVD…VDKLVSSGIR (124 aa)) folds into the RNase H type-1 domain. 4 residues coordinate Mg(2+): Asp1035, Glu1070, Asp1090, and Asp1141. The Integrase-type zinc-finger motif lies at 1155-1196 (DGIDKAQEEHEKYHSNWRAMASDFNLPPIVAKEIVASCDKCQ). Zn(2+) is bound by residues His1164, His1168, Cys1192, and Cys1195. Residues 1206 to 1356 (VDCSPGIWQL…SAGERIIDMI (151 aa)) form the Integrase catalytic domain. Asp1216, Asp1268, and Glu1304 together coordinate Mg(2+). Residues 1375-1422 (FRVYYRDNRDPIWKGPAKLLWKGEGAVVIQDNSDIKVVPRRKAKIIRD) constitute a DNA-binding region (integrase-type).

As to quaternary structure, homotrimer; further assembles as hexamers of trimers. Interacts with gp41 (via C-terminus). Interacts with host CALM1; this interaction induces a conformational change in the Matrix protein, triggering exposure of the myristate group. Interacts with host AP3D1; this interaction allows the polyprotein trafficking to multivesicular bodies during virus assembly. Part of the pre-integration complex (PIC) which is composed of viral genome, matrix protein, Vpr and integrase. Homodimer; the homodimer further multimerizes as homohexamers or homopentamers. Interacts with human PPIA/CYPA; This interaction stabilizes the capsid. Interacts with human NUP153. Interacts with host PDZD8; this interaction stabilizes the capsid. Interacts with monkey TRIM5; this interaction destabilizes the capsid. In terms of assembly, homodimer, whose active site consists of two apposed aspartic acid residues. As to quaternary structure, heterodimer of p66 RT and p51 RT (RT p66/p51). Heterodimerization of RT is essential for DNA polymerase activity. The overall folding of the subdomains is similar in p66 RT and p51 RT but the spatial arrangements of the subdomains are dramatically different. Homotetramer; may further associate as a homohexadecamer. Part of the pre-integration complex (PIC) which is composed of viral genome, matrix protein, Vpr and integrase. Interacts with human SMARCB1/INI1 and human PSIP1/LEDGF isoform 1. Interacts with human KPNA3; this interaction might play a role in nuclear import of the pre-integration complex. Interacts with human NUP153; this interaction might play a role in nuclear import of the pre-integration complex. Mg(2+) is required as a cofactor. Post-translationally, specific enzymatic cleavages by the viral protease yield mature proteins. The protease is released by autocatalytic cleavage. The polyprotein is cleaved during and after budding, this process is termed maturation. Proteolytic cleavage of p66 RT removes the RNase H domain to yield the p51 RT subunit. Nucleocapsid protein p7 might be further cleaved after virus entry. In terms of processing, tyrosine phosphorylated presumably in the virion by a host kinase. Phosphorylation is apparently not a major regulator of membrane association. Phosphorylated possibly by host MAPK1; this phosphorylation is necessary for Pin1-mediated virion uncoating. Post-translationally, methylated by host PRMT6, impairing its function by reducing RNA annealing and the initiation of reverse transcription.

It is found in the host cell membrane. The protein resides in the host endosome. The protein localises to the host multivesicular body. It localises to the virion membrane. Its subcellular location is the host nucleus. It is found in the host cytoplasm. The protein resides in the virion. It catalyses the reaction Specific for a P1 residue that is hydrophobic, and P1' variable, but often Pro.. The enzyme catalyses Endohydrolysis of RNA in RNA/DNA hybrids. Three different cleavage modes: 1. sequence-specific internal cleavage of RNA. Human immunodeficiency virus type 1 and Moloney murine leukemia virus enzymes prefer to cleave the RNA strand one nucleotide away from the RNA-DNA junction. 2. RNA 5'-end directed cleavage 13-19 nucleotides from the RNA end. 3. DNA 3'-end directed cleavage 15-20 nucleotides away from the primer terminus.. The catalysed reaction is 3'-end directed exonucleolytic cleavage of viral RNA-DNA hybrid.. It carries out the reaction DNA(n) + a 2'-deoxyribonucleoside 5'-triphosphate = DNA(n+1) + diphosphate. Its activity is regulated as follows. Protease: The viral protease is inhibited by many synthetic protease inhibitors (PIs), such as amprenavir, atazanavir, indinavir, loprinavir, nelfinavir, ritonavir and saquinavir. Use of protease inhibitors in tritherapy regimens permit more ambitious therapeutic strategies. Reverse transcriptase/ribonuclease H: RT can be inhibited either by nucleoside RT inhibitors (NRTIs) or by non nucleoside RT inhibitors (NNRTIs). NRTIs act as chain terminators, whereas NNRTIs inhibit DNA polymerization by binding a small hydrophobic pocket near the RT active site and inducing an allosteric change in this region. Classical NRTIs are abacavir, adefovir (PMEA), didanosine (ddI), lamivudine (3TC), stavudine (d4T), tenofovir (PMPA), zalcitabine (ddC), and zidovudine (AZT). Classical NNRTIs are atevirdine (BHAP U-87201E), delavirdine, efavirenz (DMP-266), emivirine (I-EBU), and nevirapine (BI-RG-587). The tritherapies used as a basic effective treatment of AIDS associate two NRTIs and one NNRTI. Functionally, mediates, with Gag polyprotein, the essential events in virion assembly, including binding the plasma membrane, making the protein-protein interactions necessary to create spherical particles, recruiting the viral Env proteins, and packaging the genomic RNA via direct interactions with the RNA packaging sequence (Psi). Gag-Pol polyprotein may regulate its own translation, by the binding genomic RNA in the 5'-UTR. At low concentration, the polyprotein would promote translation, whereas at high concentration, the polyprotein would encapsidate genomic RNA and then shut off translation. In terms of biological role, targets the polyprotein to the plasma membrane via a multipartite membrane-binding signal, that includes its myristoylated N-terminus. Matrix protein is part of the pre-integration complex. Implicated in the release from host cell mediated by Vpu. Binds to RNA. Its function is as follows. Forms the conical core that encapsulates the genomic RNA-nucleocapsid complex in the virion. Most core are conical, with only 7% tubular. The core is constituted by capsid protein hexamer subunits. The core is disassembled soon after virion entry. Host restriction factors such as TRIM5-alpha or TRIMCyp bind retroviral capsids and cause premature capsid disassembly, leading to blocks in reverse transcription. Capsid restriction by TRIM5 is one of the factors which restricts HIV-1 to the human species. Host PIN1 apparently facilitates the virion uncoating. On the other hand, interactions with PDZD8 or CYPA stabilize the capsid. Encapsulates and protects viral dimeric unspliced genomic RNA (gRNA). Binds these RNAs through its zinc fingers. Acts as a nucleic acid chaperone which is involved in rearangement of nucleic acid secondary structure during gRNA retrotranscription. Also facilitates template switch leading to recombination. As part of the polyprotein, participates in gRNA dimerization, packaging, tRNA incorporation and virion assembly. Functionally, aspartyl protease that mediates proteolytic cleavages of Gag and Gag-Pol polyproteins during or shortly after the release of the virion from the plasma membrane. Cleavages take place as an ordered, step-wise cascade to yield mature proteins. This process is called maturation. Displays maximal activity during the budding process just prior to particle release from the cell. Also cleaves Nef and Vif, probably concomitantly with viral structural proteins on maturation of virus particles. Hydrolyzes host EIF4GI and PABP1 in order to shut off the capped cellular mRNA translation. The resulting inhibition of cellular protein synthesis serves to ensure maximal viral gene expression and to evade host immune response. Also mediates cleavage of host YTHDF3. Mediates cleavage of host CARD8, thereby activating the CARD8 inflammasome, leading to the clearance of latent HIV-1 in patient CD4(+) T-cells after viral reactivation; in contrast, HIV-1 can evade CARD8-sensing when its protease remains inactive in infected cells prior to viral budding. In terms of biological role, multifunctional enzyme that converts the viral RNA genome into dsDNA in the cytoplasm, shortly after virus entry into the cell. This enzyme displays a DNA polymerase activity that can copy either DNA or RNA templates, and a ribonuclease H (RNase H) activity that cleaves the RNA strand of RNA-DNA heteroduplexes in a partially processive 3' to 5' endonucleasic mode. Conversion of viral genomic RNA into dsDNA requires many steps. A tRNA(3)-Lys binds to the primer-binding site (PBS) situated at the 5'-end of the viral RNA. RT uses the 3' end of the tRNA primer to perform a short round of RNA-dependent minus-strand DNA synthesis. The reading proceeds through the U5 region and ends after the repeated (R) region which is present at both ends of viral RNA. The portion of the RNA-DNA heteroduplex is digested by the RNase H, resulting in a ssDNA product attached to the tRNA primer. This ssDNA/tRNA hybridizes with the identical R region situated at the 3' end of viral RNA. This template exchange, known as minus-strand DNA strong stop transfer, can be either intra- or intermolecular. RT uses the 3' end of this newly synthesized short ssDNA to perform the RNA-dependent minus-strand DNA synthesis of the whole template. RNase H digests the RNA template except for two polypurine tracts (PPTs) situated at the 5'-end and near the center of the genome. It is not clear if both polymerase and RNase H activities are simultaneous. RNase H probably can proceed both in a polymerase-dependent (RNA cut into small fragments by the same RT performing DNA synthesis) and a polymerase-independent mode (cleavage of remaining RNA fragments by free RTs). Secondly, RT performs DNA-directed plus-strand DNA synthesis using the PPTs that have not been removed by RNase H as primers. PPTs and tRNA primers are then removed by RNase H. The 3' and 5' ssDNA PBS regions hybridize to form a circular dsDNA intermediate. Strand displacement synthesis by RT to the PBS and PPT ends produces a blunt ended, linear dsDNA copy of the viral genome that includes long terminal repeats (LTRs) at both ends. Its function is as follows. Catalyzes viral DNA integration into the host chromosome, by performing a series of DNA cutting and joining reactions. This enzyme activity takes place after virion entry into a cell and reverse transcription of the RNA genome in dsDNA. The first step in the integration process is 3' processing. This step requires a complex comprising the viral genome, matrix protein, Vpr and integrase. This complex is called the pre-integration complex (PIC). The integrase protein removes 2 nucleotides from each 3' end of the viral DNA, leaving recessed CA OH's at the 3' ends. In the second step, the PIC enters cell nucleus. This process is mediated through integrase and Vpr proteins, and allows the virus to infect a non dividing cell. This ability to enter the nucleus is specific of lentiviruses, other retroviruses cannot and rely on cell division to access cell chromosomes. In the third step, termed strand transfer, the integrase protein joins the previously processed 3' ends to the 5' ends of strands of target cellular DNA at the site of integration. The 5'-ends are produced by integrase-catalyzed staggered cuts, 5 bp apart. A Y-shaped, gapped, recombination intermediate results, with the 5'-ends of the viral DNA strands and the 3' ends of target DNA strands remaining unjoined, flanking a gap of 5 bp. The last step is viral DNA integration into host chromosome. This involves host DNA repair synthesis in which the 5 bp gaps between the unjoined strands are filled in and then ligated. Since this process occurs at both cuts flanking the HIV genome, a 5 bp duplication of host DNA is produced at the ends of HIV-1 integration. Alternatively, Integrase may catalyze the excision of viral DNA just after strand transfer, this is termed disintegration. The polypeptide is Gag-Pol polyprotein (gag-pol) (Human immunodeficiency virus type 1 group M subtype A (isolate MAL) (HIV-1)).